The sequence spans 238 residues: Probable transcriptional regulatory protein MGAS2096_Spy0287 (238 aa).

Belongs to the TACO1 family. YeeN subfamily.

The protein resides in the cytoplasm. This chain is Probable transcriptional regulatory protein MGAS2096_Spy0287, found in Streptococcus pyogenes serotype M12 (strain MGAS2096).